The sequence spans 105 residues: MSQPNMNDIMAQAQRMQKQLQEAQAEIVASSIVGEAGNGKVTLVLSGGGEVQDLKIDQEVVDPEDVETLQDLIIGAFQDANQKLQDLAQEKMGPLADLGGGGLPF.

Belongs to the YbaB/EbfC family. In terms of assembly, homodimer.

It localises to the cytoplasm. The protein localises to the nucleoid. Its function is as follows. Binds to DNA and alters its conformation. May be involved in regulation of gene expression, nucleoid organization and DNA protection. The chain is Nucleoid-associated protein cu1912 from Corynebacterium urealyticum (strain ATCC 43042 / DSM 7109).